The sequence spans 220 residues: Phosphatidylserine decarboxylase proenzyme (220 aa).

Catalysis depends on Ser-189, which acts as the Schiff-base intermediate with substrate; via pyruvic acid. Ser-189 is modified (pyruvic acid (Ser); by autocatalysis).

Belongs to the phosphatidylserine decarboxylase family. PSD-A subfamily. In terms of assembly, heterodimer of a large membrane-associated beta subunit and a small pyruvoyl-containing alpha subunit. It depends on pyruvate as a cofactor. Post-translationally, is synthesized initially as an inactive proenzyme. Formation of the active enzyme involves a self-maturation process in which the active site pyruvoyl group is generated from an internal serine residue via an autocatalytic post-translational modification. Two non-identical subunits are generated from the proenzyme in this reaction, and the pyruvate is formed at the N-terminus of the alpha chain, which is derived from the carboxyl end of the proenzyme. The post-translation cleavage follows an unusual pathway, termed non-hydrolytic serinolysis, in which the side chain hydroxyl group of the serine supplies its oxygen atom to form the C-terminus of the beta chain, while the remainder of the serine residue undergoes an oxidative deamination to produce ammonia and the pyruvoyl prosthetic group on the alpha chain.

The protein localises to the cell membrane. The enzyme catalyses a 1,2-diacyl-sn-glycero-3-phospho-L-serine + H(+) = a 1,2-diacyl-sn-glycero-3-phosphoethanolamine + CO2. The protein operates within phospholipid metabolism; phosphatidylethanolamine biosynthesis; phosphatidylethanolamine from CDP-diacylglycerol: step 2/2. Functionally, catalyzes the formation of phosphatidylethanolamine (PtdEtn) from phosphatidylserine (PtdSer). The sequence is that of Phosphatidylserine decarboxylase proenzyme from Pelobacter propionicus (strain DSM 2379 / NBRC 103807 / OttBd1).